Reading from the N-terminus, the 413-residue chain is Synaptosomal-associated protein 47 (413 aa).

A t-SNARE coiled-coil homology 1 domain is found at 109–171 (AANIPSHVTR…DVADRLLTEL (63 aa)). The segment at 321-342 (RHAASRPKGCTPHRELPTGGQE) is disordered. Positions 350–412 (KNLPLFSEGE…DKQNRRMRKL (63 aa)) constitute a t-SNARE coiled-coil homology 2 domain.

Belongs to the SVAP1 family. Associates with the BLOC-1 complex. Interacts with BLOC1S6. Forms a complex containing SNAP47, VAMP2 and STX1A. As to expression, ubiquitously expressed with the most abundant expression in the brain. In brain, most highly expressed in the glomerular layer of the olfactory bulb, the cortex, striatum, hippocampus, and colliculi (at protein level).

Its subcellular location is the endomembrane system. The protein resides in the cytoplasm. The protein localises to the perinuclear region. May play a role in intracellular membrane fusion. This is Synaptosomal-associated protein 47 (Snap47) from Mus musculus (Mouse).